A 450-amino-acid polypeptide reads, in one-letter code: Protein tweety homolog 1 (450 aa).

The Extracellular portion of the chain corresponds to 1–43 (MGAPPGYRPSAWVHLLHQLPRADFQLRPVPSGFAPRDQEYQQA). The chain crosses the membrane as a helical span at residues 44-64 (LLLVAALAGLGLGLSLIFIAV). The Cytoplasmic portion of the chain corresponds to 65-88 (YLIRFCCCRPPEPPGAKSPPPGGG). Residues 89–109 (CVTWSCIAALLVGCAGIGIGF) traverse the membrane as a helical segment. At 110-214 (YGNSETSDGV…DVTFVEEYRW (105 aa)) the chain is on the extracellular side. Asn-130 carries N-linked (GlcNAc...) asparagine glycosylation. Residues 215–235 (LAYVLLLLLVLLVCLFTLLGL) traverse the membrane as a helical segment. The Cytoplasmic portion of the chain corresponds to 236 to 240 (AKQSK). A helical transmembrane segment spans residues 241-261 (WLVVVMTAMSLLVLVLSWGSM). The Extracellular portion of the chain corresponds to 262-390 (GLEAATAVGL…LRGLCEDALE (129 aa)). 2 disulfide bridges follow: Cys-275–Cys-385 and Cys-303–Cys-370. Asn-284 and Asn-355 each carry an N-linked (GlcNAc...) asparagine glycan. Residues 391–411 (GLLFLMLFSLLSAGALATTLC) traverse the membrane as a helical segment. Topologically, residues 412 to 450 (SLPRAWALFPPSDDYDDTDDDDPFNPQESKRFVQWQSSI) are cytoplasmic. The disordered stretch occupies residues 428–450 (DTDDDDPFNPQESKRFVQWQSSI). At Ser-440 the chain carries Phosphoserine.

Belongs to the tweety family. Homotetramer; disulfide-linked. Homodimer. Post-translationally, N-glycosylated. Contains high-mannose, hybrid and complex oligosaccharides.

The protein localises to the cell membrane. It carries out the reaction chloride(in) = chloride(out). The catalysed reaction is L-glutamate(out) = L-glutamate(in). Calcium-independent, swelling-dependent volume-regulated anion channel (VRAC-swell) which plays a pivotal role in the process of regulatory volume decrease (RVD) in the brain through the efflux of anions like chloride and organic osmolytes like glutamate. The polypeptide is Protein tweety homolog 1 (Ttyh1) (Rattus norvegicus (Rat)).